The sequence spans 328 residues: Delta(3,5)-Delta(2,4)-dienoyl-CoA isomerase, mitochondrial (328 aa).

The transit peptide at Met-1–Leu-33 directs the protein to the mitochondrion. Residues Ala-116–Leu-120 and Gly-174 each bind substrate. Residue Lys-231 is modified to N6-succinyllysine. Ser-268 carries the phosphoserine modification. The Microbody targeting signal signature appears at Ser-326–Leu-328. Lys-327 bears the N6-acetyllysine mark.

Belongs to the enoyl-CoA hydratase/isomerase family. In terms of assembly, homohexamer.

The protein resides in the mitochondrion. It is found in the peroxisome. The enzyme catalyses (3E,5Z)-octadienoyl-CoA = (2E,4E)-octadienoyl-CoA. It catalyses the reaction (3E,5Z,8Z,11Z,14Z)-eicosapentaenoyl-CoA = (2E,4E,8Z,11Z,14Z)-eicosapentaenoyl-CoA. It participates in lipid metabolism; fatty acid beta-oxidation. Isomerization of 3-trans,5-cis-dienoyl-CoA to 2-trans,4-trans-dienoyl-CoA. This is Delta(3,5)-Delta(2,4)-dienoyl-CoA isomerase, mitochondrial from Homo sapiens (Human).